Reading from the N-terminus, the 153-residue chain is Transcriptional repressor NrdR (153 aa).

Positions 1 to 22 are disordered; the sequence is MRCPACHHNGTRVLDSRPAHEG. A zinc finger lies at 3–34; it reads CPACHHNGTRVLDSRPAHEGRSIRRRRECESC. Residues 49–139 enclose the ATP-cone domain; that stretch reads LIVVKKDGTR…VYRQFKDINV (91 aa).

It belongs to the NrdR family. Zn(2+) is required as a cofactor.

In terms of biological role, negatively regulates transcription of bacterial ribonucleotide reductase nrd genes and operons by binding to NrdR-boxes. This Halalkalibacterium halodurans (strain ATCC BAA-125 / DSM 18197 / FERM 7344 / JCM 9153 / C-125) (Bacillus halodurans) protein is Transcriptional repressor NrdR.